Consider the following 258-residue polypeptide: Imidazole glycerol phosphate synthase subunit HisF (258 aa).

Catalysis depends on residues Asp-12 and Asp-131.

Belongs to the HisA/HisF family. As to quaternary structure, heterodimer of HisH and HisF.

Its subcellular location is the cytoplasm. The catalysed reaction is 5-[(5-phospho-1-deoxy-D-ribulos-1-ylimino)methylamino]-1-(5-phospho-beta-D-ribosyl)imidazole-4-carboxamide + L-glutamine = D-erythro-1-(imidazol-4-yl)glycerol 3-phosphate + 5-amino-1-(5-phospho-beta-D-ribosyl)imidazole-4-carboxamide + L-glutamate + H(+). Its pathway is amino-acid biosynthesis; L-histidine biosynthesis; L-histidine from 5-phospho-alpha-D-ribose 1-diphosphate: step 5/9. Its function is as follows. IGPS catalyzes the conversion of PRFAR and glutamine to IGP, AICAR and glutamate. The HisF subunit catalyzes the cyclization activity that produces IGP and AICAR from PRFAR using the ammonia provided by the HisH subunit. This chain is Imidazole glycerol phosphate synthase subunit HisF, found in Pseudarthrobacter chlorophenolicus (strain ATCC 700700 / DSM 12829 / CIP 107037 / JCM 12360 / KCTC 9906 / NCIMB 13794 / A6) (Arthrobacter chlorophenolicus).